We begin with the raw amino-acid sequence, 147 residues long: uncharacterized protein (147 aa).

Residues 44–147 (LVGYIDKEIH…LKSIKERLSI (104 aa)) form the HTH LytTR-type domain.

The protein resides in the cytoplasm. This is an uncharacterized protein from Staphylococcus aureus (strain Mu50 / ATCC 700699).